The primary structure comprises 68 residues: MIFPIRCFSCGAVISEVYEEYRNRLKDGENPEEILNDLEVKKYCCRRMFASHRLDNDRELFDDIVEYK.

The Zn(2+) site is built by Cys7, Cys10, Cys44, and Cys45.

The protein belongs to the archaeal Rpo10/eukaryotic RPB10 RNA polymerase subunit family. Part of the RNA polymerase complex. It depends on Zn(2+) as a cofactor.

It localises to the cytoplasm. The catalysed reaction is RNA(n) + a ribonucleoside 5'-triphosphate = RNA(n+1) + diphosphate. DNA-dependent RNA polymerase (RNAP) catalyzes the transcription of DNA into RNA using the four ribonucleoside triphosphates as substrates. The protein is DNA-directed RNA polymerase subunit Rpo10 of Methanococcus maripaludis (strain C6 / ATCC BAA-1332).